A 663-amino-acid polypeptide reads, in one-letter code: Forkhead protein sep1 (663 aa).

A DNA-binding region (fork-head) is located at residues 128 to 222; sequence KPPYSYAMLI…LKLKLRKPGV (95 aa). 2 disordered regions span residues 220–241 and 325–387; these read PGVNSRPAPPVQDVTSSTKYGS and SPLQ…DVET. Residues 340 to 355 show a composition bias toward low complexity; that stretch reads SPASSASPSESLRNES. S446 bears the Phosphoserine mark.

The protein localises to the nucleus. Its function is as follows. Required for promoter sequence element PCB-driven, M-phase-specific transcription. Acts as a transcriptional activator with a role in the regulation of mitosis. Regulates septation and the periodic transcription of cdc15. In Schizosaccharomyces pombe (strain 972 / ATCC 24843) (Fission yeast), this protein is Forkhead protein sep1 (sep1).